The chain runs to 215 residues: Pyridoxine/pyridoxamine 5'-phosphate oxidase (215 aa).

Residues 9–12 (RRDY) and Lys-69 contribute to the substrate site. Residues 64 to 69 (RVLLLK), 79 to 80 (FT), Lys-86, and Gln-108 each bind FMN. 3 residues coordinate substrate: Tyr-126, Arg-130, and Ser-134. Residues 143-144 (QS) and Trp-188 contribute to the FMN site. 194–196 (RLH) serves as a coordination point for substrate. Residue Arg-198 participates in FMN binding.

It belongs to the pyridoxamine 5'-phosphate oxidase family. As to quaternary structure, homodimer. Requires FMN as cofactor.

It carries out the reaction pyridoxamine 5'-phosphate + O2 + H2O = pyridoxal 5'-phosphate + H2O2 + NH4(+). The enzyme catalyses pyridoxine 5'-phosphate + O2 = pyridoxal 5'-phosphate + H2O2. It participates in cofactor metabolism; pyridoxal 5'-phosphate salvage; pyridoxal 5'-phosphate from pyridoxamine 5'-phosphate: step 1/1. It functions in the pathway cofactor metabolism; pyridoxal 5'-phosphate salvage; pyridoxal 5'-phosphate from pyridoxine 5'-phosphate: step 1/1. Its function is as follows. Catalyzes the oxidation of either pyridoxine 5'-phosphate (PNP) or pyridoxamine 5'-phosphate (PMP) into pyridoxal 5'-phosphate (PLP). This chain is Pyridoxine/pyridoxamine 5'-phosphate oxidase, found in Pseudomonas putida (strain W619).